The sequence spans 199 residues: FMN-dependent NADH:quinone oxidoreductase 2 (199 aa).

FMN-binding positions include Ser-10, Ser-16–Ser-18, and Met-96–Phe-99.

It belongs to the azoreductase type 1 family. As to quaternary structure, homodimer. It depends on FMN as a cofactor.

It catalyses the reaction 2 a quinone + NADH + H(+) = 2 a 1,4-benzosemiquinone + NAD(+). It carries out the reaction N,N-dimethyl-1,4-phenylenediamine + anthranilate + 2 NAD(+) = 2-(4-dimethylaminophenyl)diazenylbenzoate + 2 NADH + 2 H(+). Functionally, quinone reductase that provides resistance to thiol-specific stress caused by electrophilic quinones. In terms of biological role, also exhibits azoreductase activity. Catalyzes the reductive cleavage of the azo bond in aromatic azo compounds to the corresponding amines. In Pseudomonas fluorescens (strain Pf0-1), this protein is FMN-dependent NADH:quinone oxidoreductase 2.